The chain runs to 566 residues: 4-hydroxy-7-methoxy-3-oxo-3,4-dihydro-2H-1,4-benzoxazin-2-yl glucoside beta-D-glucosidase 1, chloroplastic (566 aa).

The N-terminal 54 residues, 1–54, are a transit peptide targeting the chloroplast; it reads MAPLLAAAMNHAAAHPGLRSHLVGPNNESFSRHHLPSSSPQSSKRRCNLSFTTR. A disordered region spans residues 17–47; that stretch reads GLRSHLVGPNNESFSRHHLPSSSPQSSKRRC. A beta-D-glucoside-binding positions include Gln92, His196, and 244–245; that span reads NE. Catalysis depends on Glu245, which acts as the Proton donor. A disulfide bridge connects residues Cys264 and Cys270. The dimerization stretch occupies residues 325-361; the sequence is SFLDKQAEERSWDINLGWFLEPVVRGDYPFSMRSLAR. Tyr387 provides a ligand contact to a beta-D-glucoside. Dimerization stretches follow at residues 394 to 405 and 450 to 453; these read NIDISPNYSPVL and KYGN. Residues Glu460, Trp511, 518–519, and Tyr527 contribute to the a beta-D-glucoside site; that span reads EW. Residue Glu460 is the Nucleophile of the active site.

Belongs to the glycosyl hydrolase 1 family. As to quaternary structure, homo- and heterodimer. In terms of tissue distribution, expressed in all seedling parts. Most abundant in the coleoptile.

The protein localises to the plastid. It is found in the chloroplast. The enzyme catalyses Hydrolysis of terminal, non-reducing beta-D-glucosyl residues with release of beta-D-glucose.. It carries out the reaction DIMBOA beta-D-glucoside + H2O = DIMBOA + D-glucose. It catalyses the reaction DIBOA beta-D-glucoside + H2O = DIBOA + D-glucose. Its activity is regulated as follows. Reversibly inhibited by micromolar concentrations of Hg(2+) or Ag(+), but irreversibly inhibited by alkylation in presence of urea. Competitive inhibition by p-nitrophenyl beta-D-thioglucoside (pNPTGlc), glucotetrazole, and para-hydroxy-S-mandelonitrile beta-glucoside (dhurrin). Its function is as follows. Is implicated in many functions such as ABA metabolism, hydrolysis of conjugated gibberellins, conversion of storage forms of cytokinins to active forms. Also acts in defense of young plant parts against pests via the production of hydroxamic acids from hydroxamic acid glucosides. Enzymatic activity is highly correlated with plant growth. The preferred substrate is DIMBOA-beta-D-glucoside. Hydrolyzes the chromogenic substrate 6-bromo-2-naphthyl-beta-D-glucoside (6BNGlc) and various artificial aryl beta-glucosides. No activity with cellobiose, arbutin, gentiobiose, linamarin or dhurrin as substrates. This Zea mays (Maize) protein is 4-hydroxy-7-methoxy-3-oxo-3,4-dihydro-2H-1,4-benzoxazin-2-yl glucoside beta-D-glucosidase 1, chloroplastic (GLU1).